Reading from the N-terminus, the 913-residue chain is Cadherin-4 (913 aa).

The signal sequence occupies residues 1–19 (MRTGSRLLLVLLVWGSAAA). Residues 20–166 (LNGDLTVRPT…SAKGLRRQKR (147 aa)) constitute a propeptide that is removed on maturation. Cadherin domains are found at residues 167 to 274 (DWVI…RPEF), 275 to 389 (INQV…PPEF), 390 to 504 (TTST…APYF), 505 to 610 (PTNH…DNAP), and 611 to 721 (ELLP…TIGA). Residues 167–731 (DWVIPPINVP…VAAAGLGTGA (565 aa)) are Extracellular-facing. N-linked (GlcNAc...) asparagine glycans are attached at residues Asn280, Asn409, Asn554, Asn629, Asn658, and Asn699. A helical transmembrane segment spans residues 732-753 (IIAILICIIILLTMVLLFVVWM). Over 754–913 (KRREKERHTK…ADMYGGGEED (160 aa)) the chain is Cytoplasmic.

In terms of tissue distribution, embryonic brain and neuronal retina.

It localises to the cell membrane. Its function is as follows. Cadherins are calcium-dependent cell adhesion proteins. They preferentially interact with themselves in a homophilic manner in connecting cells; cadherins may thus contribute to the sorting of heterogeneous cell types. May play an important role in retinal development. The polypeptide is Cadherin-4 (CDH4) (Gallus gallus (Chicken)).